A 248-amino-acid chain; its full sequence is 4-hydroxy-tetrahydrodipicolinate reductase (248 aa).

An NAD(+)-binding site is contributed by 13 to 18 (GITGRL). Arginine 36 is a binding site for NADP(+). NAD(+) contacts are provided by residues 84–86 (GTT) and 108–111 (AANF). The Proton donor/acceptor role is filled by histidine 140. Histidine 141 provides a ligand contact to (S)-2,3,4,5-tetrahydrodipicolinate. Lysine 144 acts as the Proton donor in catalysis. Residue 150-151 (GT) participates in (S)-2,3,4,5-tetrahydrodipicolinate binding.

The protein belongs to the DapB family.

It is found in the cytoplasm. It catalyses the reaction (S)-2,3,4,5-tetrahydrodipicolinate + NAD(+) + H2O = (2S,4S)-4-hydroxy-2,3,4,5-tetrahydrodipicolinate + NADH + H(+). The catalysed reaction is (S)-2,3,4,5-tetrahydrodipicolinate + NADP(+) + H2O = (2S,4S)-4-hydroxy-2,3,4,5-tetrahydrodipicolinate + NADPH + H(+). Its pathway is amino-acid biosynthesis; L-lysine biosynthesis via DAP pathway; (S)-tetrahydrodipicolinate from L-aspartate: step 4/4. In terms of biological role, catalyzes the conversion of 4-hydroxy-tetrahydrodipicolinate (HTPA) to tetrahydrodipicolinate. The protein is 4-hydroxy-tetrahydrodipicolinate reductase of Gluconobacter oxydans (strain 621H) (Gluconobacter suboxydans).